A 478-amino-acid polypeptide reads, in one-letter code: Alcohol dehydrogenase (quinone), cytochrome c subunit (478 aa).

The signal sequence occupies residues 1–36; it reads MLNALTRDRLVSEMKQGWKLAAAIGLMAVSFGAAHA. Gln37 carries the pyrrolidone carboxylic acid modification. 3 consecutive Cytochrome c domains span residues 42–145, 189–304, and 327–417; these read ALIK…MHGV, PEVA…KSMP, and GQGN…RKGW. Heme c-binding residues include Cys56, Cys59, His60, Cys204, Cys207, His208, Cys340, Cys343, and His344.

The alcohol dehydrogenase multicomponent enzyme system is composed of a dehydrogenase subunit I (AdhA), a cytochrome c subunit II (AdhB) and a subunit III (AdhS). It depends on heme c as a cofactor.

The protein resides in the cell membrane. The enzyme catalyses ethanol + a ubiquinone = a ubiquinol + acetaldehyde. 2,6-dichloro-4-dicyanovinylphenol (PC16) and antimycin A inhibit ubiquinol oxidation activity more selectively than the ubiquinone reductase activity. In terms of biological role, cytochrome c component of the alcohol dehydrogenase multicomponent enzyme system which is involved in the production of acetic acid and in the ethanol oxidase respiratory chain. Quinohemoprotein alcohol dehydrogenase (ADH) catalyzes the oxidation of ethanol to acetaldehyde by transferring electrons to the ubiquinone embedded in the membrane phospholipids. The electrons transfer from ethanol to membranous ubiquinone occurs from pyrroloquinoline quinone (PQQ) to one heme c in subunit I (AdhA), and finally to two heme c in subunit II (AdhB). Besides ubiquinone reduction, ADH also has a ubiquinol (QH2) oxidation reaction which mediates electron transfer from ubiquinol to the non-energy generating bypass oxidase system. The electrons transfer occurs from ubiquinol (QH2) to the additional heme c within subunit II (AdhB). Also able to use quinone analogs such as 2,3-dimethoxy-5-methyl-6-n-decyl-1,4-benzoquinone (DB) and 2,3-dimethoxy-5-methyl-6-n-pentyl-1,4-benzoquinone (PB). The sequence is that of Alcohol dehydrogenase (quinone), cytochrome c subunit from Gluconobacter oxydans (strain 621H) (Gluconobacter suboxydans).